Here is a 309-residue protein sequence, read N- to C-terminus: Elongation factor Ts (309 aa).

Positions 82-85 (TDFV) are involved in Mg(2+) ion dislocation from EF-Tu.

This sequence belongs to the EF-Ts family.

It localises to the cytoplasm. Associates with the EF-Tu.GDP complex and induces the exchange of GDP to GTP. It remains bound to the aminoacyl-tRNA.EF-Tu.GTP complex up to the GTP hydrolysis stage on the ribosome. The sequence is that of Elongation factor Ts from Rickettsia typhi (strain ATCC VR-144 / Wilmington).